The chain runs to 3456 residues: Genome polyprotein (3456 aa).

The region spanning 600-743 (NVANIPLDDF…ATRLKQIQFY (144 aa)) is the Peptidase S30 domain. Active-site for P1 proteinase activity residues include His-640, Asp-652, and Ser-689. One can recognise a Peptidase C6 domain in the interval 1075 to 1196 (VWEFNEGYCY…EGEMLTYKVG (122 aa)). Residue Cys-1083 is the For helper component proteinase activity of the active site. The stretch at 1094-1126 (FINEDEMEFYKNQMNQIVLNLGAWPTFEQYLVE) is one HAT 1 repeat. Residue His-1155 is the For helper component proteinase activity of the active site. Positions 1617 to 1768 (NIRTSGETDV…TRHKIKVETL (152 aa)) constitute a Helicase ATP-binding domain. 1630-1637 (SGVGGGKS) is a binding site for ATP. Residues 1787–1947 (DATSVGDVIL…GIKPVCDRVD (161 aa)) form the Helicase C-terminal domain. The residue at position 2304 (Tyr-2304) is an O-(5'-phospho-RNA)-tyrosine. Positions 2412-2636 (AVDSHVGTPT…VEWSRLLPTT (225 aa)) constitute a Peptidase C4 domain. Active-site for nuclear inclusion protein A activity residues include His-2457, Asp-2494, and Cys-2566. One copy of the HAT 2 repeat lies at 2597–2629 (HIFEPVNETFIEMLAKMEYAKGFWKFNPELVEW). In terms of domain architecture, RdRp catalytic spans 2891 to 3011 (WVFIDCDGSR…NCPRSTANAI (121 aa)). The stretch at 3082–3115 (LNAAYIESFGYEDLMTEIEKFAHFWAKKHGLNDV) is one HAT 3 repeat.

Post-translationally, VPg is uridylylated by the polymerase and is covalently attached to the 5'-end of the genomic RNA. This uridylylated form acts as a nucleotide-peptide primer for the polymerase. Genome polyprotein of potyviruses undergoes post-translational proteolytic processing by the main proteinase NIa-pro resulting in the production of at least ten individual proteins. The P1 proteinase and the HC-pro cleave only their respective C-termini autocatalytically. 6K1 is essential for proper proteolytic separation of P3 from CI.

It localises to the host cytoplasmic vesicle. The protein resides in the virion. It catalyses the reaction RNA(n) + a ribonucleoside 5'-triphosphate = RNA(n+1) + diphosphate. The enzyme catalyses Hydrolyzes glutaminyl bonds, and activity is further restricted by preferences for the amino acids in P6 - P1' that vary with the species of potyvirus, e.g. Glu-Xaa-Xaa-Tyr-Xaa-Gln-|-(Ser or Gly) for the enzyme from tobacco etch virus. The natural substrate is the viral polyprotein, but other proteins and oligopeptides containing the appropriate consensus sequence are also cleaved.. It carries out the reaction Hydrolyzes a Gly-|-Gly bond at its own C-terminus, commonly in the sequence -Tyr-Xaa-Val-Gly-|-Gly, in the processing of the potyviral polyprotein.. Required for aphid transmission and also has proteolytic activity. Only cleaves a Gly-Gly dipeptide at its own C-terminus. Interacts with virions and aphid stylets. Acts as a suppressor of RNA-mediated gene silencing, also known as post-transcriptional gene silencing (PTGS), a mechanism of plant viral defense that limits the accumulation of viral RNAs. May have RNA-binding activity. In terms of biological role, has helicase activity. It may be involved in replication. Its function is as follows. Indispensable for virus replication. Functionally, mediates the cap-independent, EIF4E-dependent translation of viral genomic RNAs. Binds to the cap-binding site of host EIF4E and thus interferes with the host EIF4E-dependent mRNA export and translation. VPg-RNA directly binds EIF4E and is a template for transcription. Also forms trimeric complexes with EIF4E-EIF4G, which are templates for translation. Has RNA-binding and proteolytic activities. In terms of biological role, an RNA-dependent RNA polymerase that plays an essential role in the virus replication. Its function is as follows. Involved in aphid transmission, cell-to-cell and systemis movement, encapsidation of the viral RNA and in the regulation of viral RNA amplification. The protein is Genome polyprotein of Sweet potato mild mottle virus (isolate Salazar) (SPMMV).